A 257-amino-acid chain; its full sequence is Putative B3 domain-containing protein At2g27410 (257 aa).

The tract at residues 5-50 (ARTTKINHFRGTSTTQNPNRGLEPSPSSYVTRRSKEKRPINVEKRS) is disordered. Polar residues predominate over residues 8–35 (TKINHFRGTSTTQNPNRGLEPSPSSYVT). A DNA-binding region (TF-B3) is located at residues 115–209 (TPDFLTEDET…KLCFALTPKN (95 aa)). Residues 212 to 257 (RGNSLPGGDGASTSGESGQVPLPIPPARYSSNSGQGCSGESSSSSS) form a disordered region. The segment covering 241–257 (SSNSGQGCSGESSSSSS) has biased composition (low complexity).

It is found in the nucleus. The protein is Putative B3 domain-containing protein At2g27410 of Arabidopsis thaliana (Mouse-ear cress).